The sequence spans 251 residues: Probable transcriptional regulatory protein Amuc_0709 (251 aa).

It belongs to the TACO1 family.

It localises to the cytoplasm. The polypeptide is Probable transcriptional regulatory protein Amuc_0709 (Akkermansia muciniphila (strain ATCC BAA-835 / DSM 22959 / JCM 33894 / BCRC 81048 / CCUG 64013 / CIP 107961 / Muc)).